The primary structure comprises 162 residues: NADH-quinone oxidoreductase subunit I 2 (162 aa).

4Fe-4S ferredoxin-type domains follow at residues 52–82 (LRRY…IEAG) and 93–122 (VRYD…EGPN). Residues C62, C65, C68, C72, C102, C105, C108, and C112 each coordinate [4Fe-4S] cluster.

This sequence belongs to the complex I 23 kDa subunit family. NDH-1 is composed of 14 different subunits. Subunits NuoA, H, J, K, L, M, N constitute the membrane sector of the complex. Requires [4Fe-4S] cluster as cofactor.

It localises to the cell inner membrane. The enzyme catalyses a quinone + NADH + 5 H(+)(in) = a quinol + NAD(+) + 4 H(+)(out). NDH-1 shuttles electrons from NADH, via FMN and iron-sulfur (Fe-S) centers, to quinones in the respiratory chain. The immediate electron acceptor for the enzyme in this species is believed to be ubiquinone. Couples the redox reaction to proton translocation (for every two electrons transferred, four hydrogen ions are translocated across the cytoplasmic membrane), and thus conserves the redox energy in a proton gradient. This chain is NADH-quinone oxidoreductase subunit I 2, found in Rhodopseudomonas palustris (strain HaA2).